Here is a 1393-residue protein sequence, read N- to C-terminus: DNA-directed RNA polymerase subunit beta' (1393 aa).

4 residues coordinate Zn(2+): Cys72, Cys74, Cys87, and Cys90. Residues Asp463, Asp465, and Asp467 each contribute to the Mg(2+) site. Cys812, Cys887, Cys894, and Cys897 together coordinate Zn(2+).

The protein belongs to the RNA polymerase beta' chain family. In terms of assembly, the RNAP catalytic core consists of 2 alpha, 1 beta, 1 beta' and 1 omega subunit. When a sigma factor is associated with the core the holoenzyme is formed, which can initiate transcription. It depends on Mg(2+) as a cofactor. The cofactor is Zn(2+).

It carries out the reaction RNA(n) + a ribonucleoside 5'-triphosphate = RNA(n+1) + diphosphate. In terms of biological role, DNA-dependent RNA polymerase catalyzes the transcription of DNA into RNA using the four ribonucleoside triphosphates as substrates. The polypeptide is DNA-directed RNA polymerase subunit beta' (Chlamydia felis (strain Fe/C-56) (Chlamydophila felis)).